The following is a 308-amino-acid chain: ADP-L-glycero-D-manno-heptose-6-epimerase (308 aa).

Residues 10 to 11 (FI), 31 to 32 (DN), Lys38, Lys53, 75 to 79 (EGACS), and Asn92 contribute to the NADP(+) site. Residue Tyr139 is the Proton acceptor of the active site. Lys143 contributes to the NADP(+) binding site. Asn168 serves as a coordination point for substrate. 2 residues coordinate NADP(+): Val169 and Lys177. Lys177 acts as the Proton acceptor in catalysis. Residues Ser179, His186, 200-203 (FAGS), Arg208, and Tyr271 contribute to the substrate site.

Belongs to the NAD(P)-dependent epimerase/dehydratase family. HldD subfamily. As to quaternary structure, homopentamer. The cofactor is NADP(+).

It catalyses the reaction ADP-D-glycero-beta-D-manno-heptose = ADP-L-glycero-beta-D-manno-heptose. Its pathway is nucleotide-sugar biosynthesis; ADP-L-glycero-beta-D-manno-heptose biosynthesis; ADP-L-glycero-beta-D-manno-heptose from D-glycero-beta-D-manno-heptose 7-phosphate: step 4/4. It participates in bacterial outer membrane biogenesis; LOS core biosynthesis. In terms of biological role, catalyzes the interconversion between ADP-D-glycero-beta-D-manno-heptose and ADP-L-glycero-beta-D-manno-heptose via an epimerization at carbon 6 of the heptose. This is ADP-L-glycero-D-manno-heptose-6-epimerase from Haemophilus influenzae (strain ATCC 51907 / DSM 11121 / KW20 / Rd).